We begin with the raw amino-acid sequence, 269 residues long: MSDCIFVFQIPFIVYSKLDQWIFGNILCKIMSVLYYVGFFSNMFIITLMSIDRYFAIVHPIKRQPYRTKRIGILMCCSAWLLSLILSSPVSKLYENIPHMSKDIYQCTLTNENDSIIAFIKRLMQIEITILGFLIPIIIFVYCYYRIFSTVVRLRNRRKYKSIKIVLMIVVCSLICWIPLYIVLMIATIVSLYTSNIFRHLCLYLNLAYAITFSETISLARCCINPIIYTLIGEHVRSRISSICSCIYRDNRIRKKLFSRKSSSSSNII.

Cysteines 28 and 107 form a disulfide. Helical transmembrane passes span 30–50 (IMSVLYYVGFFSNMFIITLMS), 71–91 (IGILMCCSAWLLSLILSSPVS), 123–143 (LMQIEITILGFLIPIIIFVYC), 165–185 (IVLMIVVCSLICWIPLYIVLM), and 200–220 (HLCLYLNLAYAITFSETISLA).

Belongs to the G-protein coupled receptor 1 family.

Its subcellular location is the host cell membrane. The protein is G-protein coupled receptor homolog C3 of Sus scrofa (Pig).